Here is a 320-residue protein sequence, read N- to C-terminus: Esterase LipI (320 aa).

Residues serine 165, aspartate 261, and histidine 291 contribute to the active site.

It belongs to the 'GDXG' lipolytic enzyme family.

It carries out the reaction a fatty acid ester + H2O = an aliphatic alcohol + a fatty acid + H(+). The enzyme catalyses a butanoate ester + H2O = an aliphatic alcohol + butanoate + H(+). The catalysed reaction is an octanoate ester + H2O = an aliphatic alcohol + octanoate + H(+). It catalyses the reaction decanoate ester + H2O = decanoate + an aliphatic alcohol + H(+). It carries out the reaction an acetyl ester + H2O = an aliphatic alcohol + acetate + H(+). The enzyme catalyses a dodecanoate ester + H2O = an aliphatic alcohol + dodecanoate + H(+). Inhibited by ionic detergents SDS (anions) and CTAB (cationic). Strongly inhibited by Zn(2+). Esterase that can hydrolyze short-chain esters with the carbon chain containing 2 to 12 carbon atoms. In vitro, pNP-butyrate is the preferred substrate. This Mycobacterium tuberculosis (strain ATCC 25618 / H37Rv) protein is Esterase LipI.